We begin with the raw amino-acid sequence, 185 residues long: Regulator of rDNA transcription protein 13 (185 aa).

3 WD repeats span residues Gly-9–Glu-48, Gly-71–Phe-108, and His-111–Ser-148.

Functionally, may be involved in the modulation of rDNA transcription. This Saccharomyces cerevisiae (strain ATCC 204508 / S288c) (Baker's yeast) protein is Regulator of rDNA transcription protein 13 (RRT13).